The sequence spans 224 residues: UPF0758 protein Patl_0046 (224 aa).

The MPN domain maps to 102-224; the sequence is VFNSAQQTKH…AVSFAERGLI (123 aa). Positions 173, 175, and 186 each coordinate Zn(2+). The short motif at 173-186 is the JAMM motif element; sequence HNHPSGVAEPSQAD.

This sequence belongs to the UPF0758 family.

The chain is UPF0758 protein Patl_0046 from Pseudoalteromonas atlantica (strain T6c / ATCC BAA-1087).